We begin with the raw amino-acid sequence, 124 residues long: Large ribosomal subunit protein uL18 (124 aa).

Belongs to the universal ribosomal protein uL18 family. Part of the 50S ribosomal subunit; part of the 5S rRNA/L5/L18/L25 subcomplex. Contacts the 5S and 23S rRNAs.

This is one of the proteins that bind and probably mediate the attachment of the 5S RNA into the large ribosomal subunit, where it forms part of the central protuberance. This is Large ribosomal subunit protein uL18 from Thermomicrobium roseum (strain ATCC 27502 / DSM 5159 / P-2).